We begin with the raw amino-acid sequence, 62 residues long: Large ribosomal subunit protein uL30 (62 aa).

The protein belongs to the universal ribosomal protein uL30 family. In terms of assembly, part of the 50S ribosomal subunit.

This chain is Large ribosomal subunit protein uL30, found in Dinoroseobacter shibae (strain DSM 16493 / NCIMB 14021 / DFL 12).